Reading from the N-terminus, the 509-residue chain is Bifunctional purine biosynthesis protein PurH (509 aa).

One can recognise an MGS-like domain in the interval 1 to 144 (MKRALISVSD…KNYAAVTVVV (144 aa)).

It belongs to the PurH family.

It carries out the reaction (6R)-10-formyltetrahydrofolate + 5-amino-1-(5-phospho-beta-D-ribosyl)imidazole-4-carboxamide = 5-formamido-1-(5-phospho-D-ribosyl)imidazole-4-carboxamide + (6S)-5,6,7,8-tetrahydrofolate. It catalyses the reaction IMP + H2O = 5-formamido-1-(5-phospho-D-ribosyl)imidazole-4-carboxamide. It participates in purine metabolism; IMP biosynthesis via de novo pathway; 5-formamido-1-(5-phospho-D-ribosyl)imidazole-4-carboxamide from 5-amino-1-(5-phospho-D-ribosyl)imidazole-4-carboxamide (10-formyl THF route): step 1/1. Its pathway is purine metabolism; IMP biosynthesis via de novo pathway; IMP from 5-formamido-1-(5-phospho-D-ribosyl)imidazole-4-carboxamide: step 1/1. The sequence is that of Bifunctional purine biosynthesis protein PurH from Listeria monocytogenes serovar 1/2a (strain ATCC BAA-679 / EGD-e).